The sequence spans 121 residues: Large ribosomal subunit protein uL18 (121 aa).

Belongs to the universal ribosomal protein uL18 family. In terms of assembly, part of the 50S ribosomal subunit; part of the 5S rRNA/L5/L18/L25 subcomplex. Contacts the 5S and 23S rRNAs.

In terms of biological role, this is one of the proteins that bind and probably mediate the attachment of the 5S RNA into the large ribosomal subunit, where it forms part of the central protuberance. This Streptococcus suis (strain 98HAH33) protein is Large ribosomal subunit protein uL18.